A 913-amino-acid polypeptide reads, in one-letter code: MTKFQEMVTFKDVAVVFTEEELGLLDSVQRKLYRDVMLENFRNLLLVAHQPFKPDLISQLEREEKLLMVETETPRDGCSGRKNQQKMESIQEVTVSYFSPKELSSRQTWQQSAGGLIRCQDFLKVFQGKNSQLQEQGNSLGQVWAGIPVQISEDKNYIFTHIGNGSNYIKSQGYPSWRAHHSWRKMYLKESHNYQCRCQQISMKNHFCKCDSVSWLSHHNDKLEVHRKENYSCHDCGEDIMKVSLLNQESIQTEEKPYPCTGYRKAFSNDSSSEVHQQFHLEGKPYTYSSCGKGCNYSSLLHIHQNIEREDDIENSHLKSYQRVHTEEKPCKCGEYGENFNHCSPLNTYELIHTGEMSYRHNIYEKAFSHSLDLNSIFRVHTRDEPHEYEENENVFNQSSCLQVHQKIHTEEKLYTDIEYGKSFICSSNLDIQHRVHMEENSYNSEECGNGFSLASHFQDLQIVHTKEQPYKRYVCSNSFSHNLYLQGHPKIHIGEKPRKEHGNGFNWSSKLKDHQRVHTGQKPYKCNICGKGFNHRSVLNVHQRVHTGEKPYKCEECDKGFSRSSYLQAHQRVHTGEKPYKCEECGKGFSRNSYLQGHQRVHTGEKPYKCEECGKGFSRSSHLQGHQRVHTGEKPFKCEECGKGFSWSFNLQIHQRVHTGEKPYKCEECGKGFSKASTLLAHQRVHTGEKPYQCDECGKSFSQRSYLQSHQSVHSGERPYICEVCGKGFSQRAYLQGHQRVHTRVKPYKCEMCGKGFSQSSRLEAHRRVHTGGKPYKCEVCTKGFSESSRLQAHQRVHVEGRPYKCEQCGKGFSGYSSLQAHHRVHTGEKPYKCEVCGKGFSQRSNLQAHQRVHTGEKPYKCDACGKGFRWSSGLLIHQRVHSSDKFYKSEDYGKDYPSSENLHRNEDSVLF.

The region spanning 8 to 79 (VTFKDVAVVF…ETETPRDGCS (72 aa)) is the KRAB domain. Residue Lys-256 forms a Glycyl lysine isopeptide (Lys-Gly) (interchain with G-Cter in SUMO2) linkage. The C2H2-type 1; degenerate zinc-finger motif lies at 258-280 (YPCTGYRKAFSNDSSSEVHQQFH). The segment at 443 to 465 (YNSEECGNGFSLASHFQDLQIVH) adopts a C2H2-type 2; degenerate zinc-finger fold. The segment at 471 to 493 (YKRYVCSNSFSHNLYLQGHPKIH) adopts a C2H2-type 3; degenerate zinc-finger fold. Residues 497–519 (KPRKEHGNGFNWSSKLKDHQRVH) form a C2H2-type 4; degenerate zinc finger. 13 C2H2-type zinc fingers span residues 525 to 547 (YKCNICGKGFNHRSVLNVHQRVH), 553 to 575 (YKCEECDKGFSRSSYLQAHQRVH), 581 to 603 (YKCEECGKGFSRNSYLQGHQRVH), 609 to 631 (YKCEECGKGFSRSSHLQGHQRVH), 637 to 659 (FKCEECGKGFSWSFNLQIHQRVH), 665 to 687 (YKCEECGKGFSKASTLLAHQRVH), 693 to 715 (YQCDECGKSFSQRSYLQSHQSVH), 721 to 743 (YICEVCGKGFSQRAYLQGHQRVH), 749 to 771 (YKCEMCGKGFSQSSRLEAHRRVH), 777 to 799 (YKCEVCTKGFSESSRLQAHQRVH), 805 to 827 (YKCEQCGKGFSGYSSLQAHHRVH), 833 to 855 (YKCEVCGKGFSQRSNLQAHQRVH), and 861 to 883 (YKCDACGKGFRWSSGLLIHQRVH). A Glycyl lysine isopeptide (Lys-Gly) (interchain with G-Cter in SUMO2) cross-link involves residue Lys-890.

Belongs to the krueppel C2H2-type zinc-finger protein family.

Its subcellular location is the nucleus. Functionally, may be involved in transcriptional regulation. The chain is Zinc finger protein 112 (ZNF112) from Homo sapiens (Human).